We begin with the raw amino-acid sequence, 211 residues long: Holliday junction resolvase RecU (211 aa).

4 residues coordinate Mg(2+): Thr87, Asp89, Asp102, and Gln121.

It belongs to the RecU family. The cofactor is Mg(2+).

It is found in the cytoplasm. The catalysed reaction is Endonucleolytic cleavage at a junction such as a reciprocal single-stranded crossover between two homologous DNA duplexes (Holliday junction).. Its function is as follows. Endonuclease that resolves Holliday junction intermediates in genetic recombination. Cleaves mobile four-strand junctions by introducing symmetrical nicks in paired strands. Promotes annealing of linear ssDNA with homologous dsDNA. Required for DNA repair, homologous recombination and chromosome segregation. The chain is Holliday junction resolvase RecU from Limosilactobacillus fermentum (strain NBRC 3956 / LMG 18251) (Lactobacillus fermentum).